The following is a 317-amino-acid chain: MLILPKTTIKALLLVIFGSLIVSFAIFFMVLENNEITVVPNLYSLAIEDAVLELQRKELIPHIEFKFSSSALDKGKVIDQGPKPGTVLRHGNKVIIFISKGAIINRVDSFIGKNIDDVIINLKANSFDNSKLLYHIVQPLEVESELPKGIIISQNPSPGSQISSLTDLQFLISKGKDHLDKHVKNYVGIYYKDAIASLLSDSINFDIDLANIGDFGNIISQSIPPGTKINESDKILITIAKPKVDNKIVFGILTYKLRQHPSYVDISVRLKGVDGKNSLIYSFKSKGGLIKLPYEVNKGSMIELYIYDKLINQTVIN.

The helical transmembrane segment at 11–31 threads the bilayer; that stretch reads ALLLVIFGSLIVSFAIFFMVL. PASTA domains lie at 33–100, 101–174, and 180–241; these read NNEI…FISK, GAII…LISK, and DKHV…TIAK.

The protein localises to the membrane. This is an uncharacterized protein from Borreliella burgdorferi (strain ATCC 35210 / DSM 4680 / CIP 102532 / B31) (Borrelia burgdorferi).